A 429-amino-acid polypeptide reads, in one-letter code: UPF0597 protein GSU1527 (429 aa).

This sequence belongs to the UPF0597 family.

The polypeptide is UPF0597 protein GSU1527 (Geobacter sulfurreducens (strain ATCC 51573 / DSM 12127 / PCA)).